The sequence spans 808 residues: Sucrose synthase (808 aa).

The interval 271 to 753 (MLFRIALISP…GIERVYSTYT (483 aa)) is GT-B glycosyltransferase.

The protein belongs to the glycosyltransferase 1 family. Probably a homotetramer.

It carries out the reaction an NDP-alpha-D-glucose + D-fructose = a ribonucleoside 5'-diphosphate + sucrose + H(+). It catalyses the reaction ADP-alpha-D-glucose + D-fructose = sucrose + ADP + H(+). In terms of biological role, catalyzes the reversible conversion of sucrose and a nucleotide disphosphate (NDP) into fructose and NDP-glucose; although the reaction is freely reversible in vitro, the physiological reaction seems to be sucrose cleavage. Unlike characterized plant enzymes prefers ADP as a cosubstrate, whereas plants prefer UDP. Its preference for ADP over UDP suggests it may directly link sucrose and glycogen metabolism. This chain is Sucrose synthase, found in Thermosynechococcus vestitus (strain NIES-2133 / IAM M-273 / BP-1).